A 248-amino-acid polypeptide reads, in one-letter code: Pyridoxine 5'-phosphate synthase (248 aa).

Asparagine 12 lines the 3-amino-2-oxopropyl phosphate pocket. 1-deoxy-D-xylulose 5-phosphate is bound at residue 14-15 (DH). Arginine 23 provides a ligand contact to 3-amino-2-oxopropyl phosphate. Catalysis depends on histidine 48, which acts as the Proton acceptor. The 1-deoxy-D-xylulose 5-phosphate site is built by arginine 50 and histidine 55. Glutamate 75 serves as the catalytic Proton acceptor. Threonine 105 contributes to the 1-deoxy-D-xylulose 5-phosphate binding site. Residue histidine 196 is the Proton donor of the active site. 3-amino-2-oxopropyl phosphate contacts are provided by residues glycine 197 and 218 to 219 (GH).

It belongs to the PNP synthase family. Homooctamer; tetramer of dimers.

It localises to the cytoplasm. It carries out the reaction 3-amino-2-oxopropyl phosphate + 1-deoxy-D-xylulose 5-phosphate = pyridoxine 5'-phosphate + phosphate + 2 H2O + H(+). It functions in the pathway cofactor biosynthesis; pyridoxine 5'-phosphate biosynthesis; pyridoxine 5'-phosphate from D-erythrose 4-phosphate: step 5/5. Functionally, catalyzes the complicated ring closure reaction between the two acyclic compounds 1-deoxy-D-xylulose-5-phosphate (DXP) and 3-amino-2-oxopropyl phosphate (1-amino-acetone-3-phosphate or AAP) to form pyridoxine 5'-phosphate (PNP) and inorganic phosphate. The protein is Pyridoxine 5'-phosphate synthase of Stutzerimonas stutzeri (strain A1501) (Pseudomonas stutzeri).